The primary structure comprises 1479 residues: Protein CHROMATIN REMODELING 20 (1479 aa).

A coiled-coil region spans residues 19–49; the sequence is EVIVESKEDEMDIIIEENREAEQEVMEVKAR. Basic and acidic residues predominate over residues 40-55; it reads EQEVMEVKARDGRGEQ. The interval 40–109 is disordered; the sequence is EQEVMEVKAR…DELDLEKPLS (70 aa). Residues 76–86 show a composition bias toward low complexity; sequence DASSRSESSDF. A compositionally biased stretch (basic and acidic residues) spans 94–109; it reads ILSRRDDELDLEKPLS. A coiled-coil region spans residues 109–199; that stretch reads SEEEIDELIS…EQLDGAGIEL (91 aa). The ADD domain maps to 472–601; sequence RDDSQNPANN…KKSIELSSDS (130 aa). The segment at 483-514 adopts a GATA-type; atypical zinc-finger fold; that stretch reads RCTACNKVAVEVHSHPLLEVIVCMDCKRSIED. The PHD-type; atypical zinc-finger motif lies at 524–577; that stretch reads ERHCEWCGHIADLIDCRTCEKLFCASCIKRNIGEEYMSEAQSSGWDCCCCSPIP. Positions 578-598 form a coiled coil; sequence LQRLTLELEKAMRDKKSIELS. The tract at residues 594-615 is disordered; the sequence is SIELSSDSSSDSSSDNNSVDTD. A compositionally biased stretch (low complexity) spans 598–615; sequence SSDSSSDSSSDNNSVDTD. One can recognise a Helicase ATP-binding domain in the interval 741 to 924; that stretch reads VKSGDKGLGC…YCMVDFVREG (184 aa). 754 to 761 lines the ATP pocket; it reads HTMGLGKT. Residues 875-878 carry the DEAH box motif; the sequence is DEAH. Residues 1122 to 1290 form the Helicase C-terminal domain; the sequence is DILSMSADVG…QVHRTISKEE (169 aa). Positions 1400–1423 are disordered; that stretch reads SESPVVPKPSPSTQTEPLPQPKGF.

It belongs to the SNF2/RAD54 helicase family.

It is found in the nucleus. Its subcellular location is the chromosome. The protein resides in the telomere. Involved in transcriptional regulation and chromatin remodeling. Facilitates DNA replication in multiple cellular environments and is required for efficient replication of a subset of genomic loci. Binds to DNA tandem repeat sequences in both telomeres and euchromatin and in vitro binds DNA quadruplex structures. May help stabilizing G-rich regions into regular chromatin structures by remodeling G4 DNA and incorporating H3.3-containing nucleosomes. Involved in DNA repair of gamma-irradiation-mediated damages. This is Protein CHROMATIN REMODELING 20 from Arabidopsis thaliana (Mouse-ear cress).